Here is a 261-residue protein sequence, read N- to C-terminus: Tryptophan synthase alpha chain (261 aa).

Residues Glu49 and Asp60 each act as proton acceptor in the active site.

It belongs to the TrpA family. As to quaternary structure, tetramer of two alpha and two beta chains.

The enzyme catalyses (1S,2R)-1-C-(indol-3-yl)glycerol 3-phosphate + L-serine = D-glyceraldehyde 3-phosphate + L-tryptophan + H2O. Its pathway is amino-acid biosynthesis; L-tryptophan biosynthesis; L-tryptophan from chorismate: step 5/5. Its function is as follows. The alpha subunit is responsible for the aldol cleavage of indoleglycerol phosphate to indole and glyceraldehyde 3-phosphate. The sequence is that of Tryptophan synthase alpha chain from Roseiflexus sp. (strain RS-1).